A 213-amino-acid polypeptide reads, in one-letter code: Large ribosomal subunit protein uL1 (213 aa).

Belongs to the universal ribosomal protein uL1 family. In terms of assembly, part of the 50S ribosomal subunit.

In terms of biological role, binds directly to 23S rRNA. Probably involved in E site tRNA release. Protein L1 is also a translational repressor protein, it controls the translation of its operon by binding to its mRNA. The polypeptide is Large ribosomal subunit protein uL1 (Methanocella arvoryzae (strain DSM 22066 / NBRC 105507 / MRE50)).